The sequence spans 97 residues: F-actin-capping protein subunit beta (97 aa).

Disordered regions lie at residues 1 to 27 and 43 to 66; these read RLPPQQIEKSPWSNKYDPPLEDGAMPS and KSGSGTMNLGGSLTRQMEKDETVS. The segment covering 43-57 has biased composition (polar residues); that stretch reads KSGSGTMNLGGSLTR. Lysine 97 carries the N6-acetyllysine modification.

This sequence belongs to the F-actin-capping protein beta subunit family. Component of the F-actin capping complex, composed of a heterodimer of an alpha and a beta subunit. Subunit of dynactin, a multiprotein complex part of a tripartite complex with dynein and a adapter, such as BICDL1, BICD2 or HOOK3. The dynactin complex is built around ACTR1A/ACTB filament and consists of an actin-related filament composed of a shoulder domain, a pointed end and a barbed end. Its length is defined by its flexible shoulder domain. The soulder is composed of 2 DCTN1 subunits, 4 DCTN2 and 2 DCTN3. The 4 DCNT2 (via N-terminus) bind the ACTR1A filament and act as molecular rulers to determine the length. The pointed end is important for binding dynein-dynactin cargo adapters. Consists of 4 subunits: ACTR10, DCNT4, DCTN5 and DCTN6. The barbed end is composed of a CAPZA1:CAPZB heterodimers, which binds ACTR1A/ACTB filament and dynactin and stabilizes dynactin. Interacts with ARHGAP17. Interaction with RCSD1/CAPZIP. Component of the WASH complex, composed of F-actin-capping protein subunit alpha (CAPZA1, CAPZA2 or CAPZA3), F-actin-capping protein subunit beta (CAPZB), WASH (WASHC1, WASH2P, WASH3P, WASH4P, WASH5P or WASH6P), WASHC2 (WASHC2A or WASHC2C), WASHC3, WASHC4 and WASHC5. Interacts with ACTG1. Directly interacts with CRACD; this interaction decreases binding to actin.

The protein resides in the cytoplasm. The protein localises to the cytoskeleton. Its subcellular location is the myofibril. It is found in the sarcomere. Its function is as follows. F-actin-capping proteins bind in a Ca(2+)-independent manner to the fast growing ends of actin filaments (barbed end) thereby blocking the exchange of subunits at these ends. Unlike other capping proteins (such as gelsolin and severin), these proteins do not sever actin filaments. Plays a role in the regulation of cell morphology and cytoskeletal organization. Forms, with CAPZB, the barbed end of the fast growing ends of actin filaments in the dynactin complex and stabilizes dynactin structure. The dynactin multiprotein complex activates the molecular motor dynein for ultra-processive transport along microtubules. The protein is F-actin-capping protein subunit beta of Mesocricetus auratus (Golden hamster).